The chain runs to 86 residues: Small ribosomal subunit protein bS20 (86 aa).

Positions 1–25 are disordered; the sequence is MANIKSQMKRIRTNEAARKRNQSVK.

The protein belongs to the bacterial ribosomal protein bS20 family.

In terms of biological role, binds directly to 16S ribosomal RNA. In Nocardia farcinica (strain IFM 10152), this protein is Small ribosomal subunit protein bS20.